We begin with the raw amino-acid sequence, 506 residues long: Adenylosuccinate synthetase (506 aa).

GTP-binding positions include 35-41 and 63-65; these read GDEGKGK and GHT. The Proton acceptor role is filled by aspartate 36. Positions 36 and 63 each coordinate Mg(2+). IMP is bound by residues 36-39, 61-64, threonine 212, arginine 226, asparagine 304, threonine 319, and arginine 383; these read DEGK and NAGH. Residue histidine 64 is the Proton donor of the active site. Position 379-385 (379-385) interacts with substrate; that stretch reads VTTKRKR. Residues arginine 385, 411–413, and 494–496 each bind GTP; these read KLD and GVG.

The protein belongs to the adenylosuccinate synthetase family. In terms of assembly, homodimer. Mg(2+) serves as cofactor.

Its subcellular location is the cytoplasm. It catalyses the reaction IMP + L-aspartate + GTP = N(6)-(1,2-dicarboxyethyl)-AMP + GDP + phosphate + 2 H(+). The protein operates within purine metabolism; AMP biosynthesis via de novo pathway; AMP from IMP: step 1/2. Functionally, plays an important role in the de novo pathway and in the salvage pathway of purine nucleotide biosynthesis. Catalyzes the first committed step in the biosynthesis of AMP from IMP. The protein is Adenylosuccinate synthetase of Drosophila yakuba (Fruit fly).